The primary structure comprises 235 residues: Dephospho-CoA kinase (235 aa).

One can recognise a DPCK domain in the interval 15 to 219 (NVGLTGSISC…KKERLQRKSA (205 aa)). 23–28 (SCGKST) contacts ATP.

It belongs to the CoaE family.

It is found in the cytoplasm. The catalysed reaction is 3'-dephospho-CoA + ATP = ADP + CoA + H(+). It participates in cofactor biosynthesis; coenzyme A biosynthesis; CoA from (R)-pantothenate: step 5/5. In terms of biological role, catalyzes the phosphorylation of the 3'-hydroxyl group of dephosphocoenzyme A to form coenzyme A. The protein is Dephospho-CoA kinase of Syntrophus aciditrophicus (strain SB).